A 424-amino-acid polypeptide reads, in one-letter code: MPESMHASSRFVSRLTRQTLALILAGGRGSRLQKLTEWRAKPAVPFGGKFRIIDFPLSNCVNSGIRQVGVLTQYKADSLIRHIQQGWGFLRGELGEFIDIMPAQQRLQESWYAGTADAVYQNLDIIRQRDPEFIMILAGDHVYKMDYGLMLAYHVERKADLTIGCMEVPLADAKAFGVMQMDGEQRIRKFVEKPSDPPPMPNRPDHAAASMGIYIFNTAFLFEQLIKDADTPGSNHDFGMDIIPQVIQKYRVFAYRFRNAQSGVQAYWRDVGTVDSYWAANMELIGVDPELNLYDQEWPIWTYQAQTPPAKFVFDDDDRRGMAVDSMVSGGCIISGAEVRHSLLFSNVRVNSFSRVLDSVILPDVNIGRHCRISRAVIDKGCNIPPNTVIGENLEDDRKRFYVSPEGIVLVTPDCLGQRLHFHR.

Alpha-D-glucose 1-phosphate contacts are provided by residues Tyr-112, Gly-177, 192–193 (EK), and Ser-210.

This sequence belongs to the bacterial/plant glucose-1-phosphate adenylyltransferase family. As to quaternary structure, homotetramer.

The enzyme catalyses alpha-D-glucose 1-phosphate + ATP + H(+) = ADP-alpha-D-glucose + diphosphate. It functions in the pathway glycan biosynthesis; glycogen biosynthesis. Its function is as follows. Involved in the biosynthesis of ADP-glucose, a building block required for the elongation reactions to produce glycogen. Catalyzes the reaction between ATP and alpha-D-glucose 1-phosphate (G1P) to produce pyrophosphate and ADP-Glc. The protein is Glucose-1-phosphate adenylyltransferase of Methylococcus capsulatus (strain ATCC 33009 / NCIMB 11132 / Bath).